The following is a 144-amino-acid chain: Large ribosomal subunit protein uL15 (144 aa).

The disordered stretch occupies residues 1 to 60; sequence MKMNTLKPAEGSKQSPKRLGRGIGSGLGKTGGRGHKGQTSRSGGTIRPGFEGGQQPLQRR. Gly residues predominate over residues 21–31; sequence RGIGSGLGKTG.

Belongs to the universal ribosomal protein uL15 family. As to quaternary structure, part of the 50S ribosomal subunit.

Binds to the 23S rRNA. This is Large ribosomal subunit protein uL15 from Hahella chejuensis (strain KCTC 2396).